Here is a 218-residue protein sequence, read N- to C-terminus: Peptidase E (218 aa).

Active-site charge relay system residues include S123, D138, and H160.

This sequence belongs to the peptidase S51 family.

The protein resides in the cytoplasm. It catalyses the reaction Dipeptidase E catalyzes the hydrolysis of dipeptides Asp-|-Xaa. It does not act on peptides with N-terminal Glu, Asn or Gln, nor does it cleave isoaspartyl peptides.. Its function is as follows. Hydrolyzes dipeptides containing N-terminal aspartate residues. May play a role in allowing the cell to use peptide aspartate to spare carbon otherwise required for the synthesis of the aspartate family of amino acids. This Haemophilus influenzae (strain ATCC 51907 / DSM 11121 / KW20 / Rd) protein is Peptidase E.